The sequence spans 871 residues: CRISPR system Cmr subunit Cmr2 (871 aa).

Positions 1–215 (MVNIKEKLFV…THLDLTSALS (215 aa)) are not required for target RNA cleavage. Positions 13, 14, and 25 each coordinate Mn(2+). Residues Cys-448, Cys-451, Cys-478, and Cys-481 each coordinate Zn(2+). The GGDEF domain maps to 592 to 752 (KYYAILVMDG…GKDTLAIGLL (161 aa)). Mn(2+)-binding residues include Asp-600, Glu-656, Asp-673, Asp-674, Glu-694, and Glu-700.

Belongs to the CRISPR system Cmr2 family. Part of the type III-B Cmr ribonucleoprotein (RNP) complex, an elongated RNP with Cmr2 and Cmr3 as the base, with Cmr4 and Cmr5 forming a helical core along the mature crRNA (39 or 45 nt in length), while the complex is capped by Cmr6 and Cmr1. The 5' end of the crRNA is bound to Cmr2 and Cmr3, while Cmr6 and a Cmr1 subunit (Cmr1-1 or Cmr1-2) cap the 3' end of the crRNA. The target RNA lies antiparallel to the crRNA, with its 5' end near Cmr1 and Cmr6 and its 3' end near Cmr2 and Cmr3; major target cleavage occurs nears the junction of Cmr1/Cmr6 and Cmr4/Cmr, with minor cleavage occurring at 6 nt intervals which coincide with the proposed spacing of Cmr4 subunits. Forms a 1:1 complex with Cmr3. The Cmr2-Cmr3 complex non-specifically binds ss-target RNA and crRNA. Interacts with Cmr3, Cmr4 and Cmr5. Ca(2+) serves as cofactor. Mn(2+) is required as a cofactor. It depends on Zn(2+) as a cofactor.

It localises to the cytoplasm. Its function is as follows. CRISPR (clustered regularly interspaced short palindromic repeat), is an adaptive immune system that provides protection against mobile genetic elements (viruses, transposable elements and conjugative plasmids). CRISPR clusters contain sequences complementary to antecedent mobile elements and target invading nucleic acids. CRISPR clusters are transcribed and processed into CRISPR RNA (crRNA), formerly called psiRNA (prokaryotic silencing) in this organism. Part of the Cmr ribonucleoprotein complex which has divalent cation-dependent endoribonuclease activity specific for ssRNA complementary to the crRNA (target RNA), generating 5' hydroxy- and 3' phosphate or 2'-3' cyclic phosphate termini. Cmr4 is probably the subunit that cleaves target RNA. Cmr complex does not cleave ssDNA complementary to the crRNA. Cleavage of target RNA is guided by the crRNA; substrate cleavage occurs a fixed distance (14 nt) from the 3' end of the crRNA. In vitro reconstitution shows Cmr1-2 and Cmr5 are not absolutely necessary for target cleavage. The chain is CRISPR system Cmr subunit Cmr2 from Pyrococcus furiosus (strain ATCC 43587 / DSM 3638 / JCM 8422 / Vc1).